Consider the following 306-residue polypeptide: D-glucosamine-6-phosphate 4-epimerase (306 aa).

Residues Asp19–Leu153 enclose the SIS domain. Catalysis depends on Glu200, which acts as the Proton acceptor. His216 acts as the Proton donor in catalysis. The active-site Proton acceptor is the Arg296.

The protein belongs to the PGI/PMI family.

It carries out the reaction D-glucosamine 6-phosphate = D-galactosamine 6-phosphate. Its function is as follows. Involved in the synthesis of UDP-N-acetylgalactosamine (UDP-GalNAc). Catalyzes the conversion of glucosamine-6-phosphate (GlcN-6-P) to galactosamine-6-phosphate (GalN-6-P). This is D-glucosamine-6-phosphate 4-epimerase from Sulfolobus acidocaldarius (strain ATCC 33909 / DSM 639 / JCM 8929 / NBRC 15157 / NCIMB 11770).